A 418-amino-acid chain; its full sequence is eIF5-mimic protein 2-B (418 aa).

Residues 1–15 are compositionally biased toward polar residues; it reads MSYQKQQKPTLTGQR. The segment at 1 to 29 is disordered; sequence MSYQKQQKPTLTGQRFKTRKRDEKERFDP. Positions 247–414 constitute a W2 domain; sequence NQQSLGARKE…KNAEEESESE (168 aa).

Belongs to the BZW family.

Functionally, translation initiation regulator which may repress repeat-associated non-AUG (RAN) initiated translation probably by acting as a competitive inhibitor of eukaryotic translation initiation factor 5 (EIF5) function. Enhances histone H4 gene transcription but does not seem to bind DNA directly. In Danio rerio (Zebrafish), this protein is eIF5-mimic protein 2-B (bzw1b).